The following is a 111-amino-acid chain: MRKTPKNLESLHKFAEAYAKLSRTYFCIDQSITALVIEGLARHKDDYGAPLCPCRHYENKKTEVLAAYWNCPCVPMRERKECHCMLFLQPSNEFSGESQLISKDDLQKHLS.

Cys52 provides a ligand contact to [4Fe-4S] cluster. The active-site Nucleophile is Cys54. A disulfide bridge links Cys54 with Cys84. Residues Cys71, Cys73, and Cys82 each coordinate [4Fe-4S] cluster.

Belongs to the ferredoxin thioredoxin reductase beta subunit family. As to quaternary structure, heterodimer of subunit A (variable subunit) and subunit B (catalytic subunit). Heterodimeric FTR forms a complex with ferredoxin and thioredoxin. Requires [4Fe-4S] cluster as cofactor.

It localises to the plastid. It is found in the chloroplast. It carries out the reaction [thioredoxin]-disulfide + 2 reduced [2Fe-2S]-[ferredoxin] + 2 H(+) = [thioredoxin]-dithiol + 2 oxidized [2Fe-2S]-[ferredoxin]. Functionally, catalytic subunit of the ferredoxin-thioredoxin reductase (FTR), which catalyzes the two-electron reduction of thioredoxins by the electrons provided by reduced ferredoxin. This chain is Ferredoxin-thioredoxin reductase, catalytic chain (ftrB), found in Cyanidium caldarium (Red alga).